The primary structure comprises 224 residues: MFFNKKNNQDELKKLAATEAAKSITTEITLGVGTGSTVGFLIEELVNYRDKIKTVVSSSEDSTRKLKALGFDVVDLNYAGEIDLYIDGADECNNHKELIKGGGAALTREKICVAAAKKFICIIDESKKVNTLGNFPLPIEVIPMARSYVARQIVKLGGQPVYREQTITDNGNVILDVYNLKIDNPLKLETELNQITGVVTNGIFALKPADTVIMATKDSNIVVL.

Residues T34–T37, D87–D90, and K100–G103 contribute to the substrate site. The Proton acceptor role is filled by E109. K127 is a substrate binding site.

It belongs to the ribose 5-phosphate isomerase family. Homodimer.

The catalysed reaction is aldehydo-D-ribose 5-phosphate = D-ribulose 5-phosphate. It participates in carbohydrate degradation; pentose phosphate pathway; D-ribose 5-phosphate from D-ribulose 5-phosphate (non-oxidative stage): step 1/1. Catalyzes the reversible conversion of ribose-5-phosphate to ribulose 5-phosphate. This chain is Ribose-5-phosphate isomerase A, found in Francisella tularensis subsp. novicida (strain U112).